The following is a 311-amino-acid chain: Methionyl-tRNA formyltransferase (311 aa).

Residue Ser112–Pro115 participates in (6S)-5,6,7,8-tetrahydrofolate binding.

Belongs to the Fmt family.

It carries out the reaction L-methionyl-tRNA(fMet) + (6R)-10-formyltetrahydrofolate = N-formyl-L-methionyl-tRNA(fMet) + (6S)-5,6,7,8-tetrahydrofolate + H(+). In terms of biological role, attaches a formyl group to the free amino group of methionyl-tRNA(fMet). The formyl group appears to play a dual role in the initiator identity of N-formylmethionyl-tRNA by promoting its recognition by IF2 and preventing the misappropriation of this tRNA by the elongation apparatus. The polypeptide is Methionyl-tRNA formyltransferase (Agrobacterium fabrum (strain C58 / ATCC 33970) (Agrobacterium tumefaciens (strain C58))).